Consider the following 304-residue polypeptide: GTP cyclohydrolase FolE2 (304 aa).

It belongs to the GTP cyclohydrolase IV family.

The enzyme catalyses GTP + H2O = 7,8-dihydroneopterin 3'-triphosphate + formate + H(+). Its pathway is cofactor biosynthesis; 7,8-dihydroneopterin triphosphate biosynthesis; 7,8-dihydroneopterin triphosphate from GTP: step 1/1. Functionally, converts GTP to 7,8-dihydroneopterin triphosphate. This is GTP cyclohydrolase FolE2 from Chromohalobacter salexigens (strain ATCC BAA-138 / DSM 3043 / CIP 106854 / NCIMB 13768 / 1H11).